The primary structure comprises 128 residues: MAREFKRSDRVAQEIQKEIAVILQREVKDPRIGMVTVSDVEVSSDLSYAKIFVTFLFDHDETAIEQGMKGLEKASPYIRSLLGKAMRLRIVPEIRFIYDQSLVEGMRMSNLVTNVVREDEKKHVEESN.

The protein belongs to the RbfA family. Monomer. Binds 30S ribosomal subunits, but not 50S ribosomal subunits or 70S ribosomes.

It localises to the cytoplasm. One of several proteins that assist in the late maturation steps of the functional core of the 30S ribosomal subunit. Associates with free 30S ribosomal subunits (but not with 30S subunits that are part of 70S ribosomes or polysomes). Required for efficient processing of 16S rRNA. May interact with the 5'-terminal helix region of 16S rRNA. The protein is Ribosome-binding factor A of Haemophilus influenzae (strain 86-028NP).